The following is a 187-amino-acid chain: Ribonuclease HII (187 aa).

Residues 1-187 (MIILGIDEAG…YKPVQVLLNE (187 aa)) form the RNase H type-2 domain. The a divalent metal cation site is built by Asp7, Glu8, and Asp99.

This sequence belongs to the RNase HII family. It depends on Mn(2+) as a cofactor. Requires Mg(2+) as cofactor.

It is found in the cytoplasm. It carries out the reaction Endonucleolytic cleavage to 5'-phosphomonoester.. Functionally, endonuclease that specifically degrades the RNA of RNA-DNA hybrids. The protein is Ribonuclease HII of Francisella tularensis subsp. mediasiatica (strain FSC147).